A 47-amino-acid polypeptide reads, in one-letter code: Large ribosomal subunit protein bL33 (47 aa).

It belongs to the bacterial ribosomal protein bL33 family.

In Staphylococcus capitis, this protein is Large ribosomal subunit protein bL33.